Here is a 611-residue protein sequence, read N- to C-terminus: Protein PES4 (611 aa).

The tract at residues 37-81 (FNPVVTPIRPDDYHEKTSRSSSSSHSDSPEFLRINNNKSGHKNGK) is disordered. The span at 45–54 (RPDDYHEKTS) shows a compositional bias: basic and acidic residues. RRM domains lie at 91 to 169 (VPLF…PSLR), 179 to 247 (TNVF…GKKI), 303 to 379 (NSIF…RAQD), and 393 to 471 (STLF…WERQ).

It localises to the nucleus. This Saccharomyces cerevisiae (strain ATCC 204508 / S288c) (Baker's yeast) protein is Protein PES4 (PES4).